Here is a 250-residue protein sequence, read N- to C-terminus: UPF0736 protein YjbA (250 aa).

The protein belongs to the UPF0736 family.

The protein is UPF0736 protein YjbA (yjbA) of Bacillus subtilis (strain 168).